Here is a 142-residue protein sequence, read N- to C-terminus: Large ribosomal subunit protein uL13 (142 aa).

Belongs to the universal ribosomal protein uL13 family. In terms of assembly, part of the 50S ribosomal subunit.

This protein is one of the early assembly proteins of the 50S ribosomal subunit, although it is not seen to bind rRNA by itself. It is important during the early stages of 50S assembly. In Shewanella denitrificans (strain OS217 / ATCC BAA-1090 / DSM 15013), this protein is Large ribosomal subunit protein uL13.